The following is a 484-amino-acid chain: ATP-dependent rRNA helicase RRP3 (484 aa).

Polar residues predominate over residues 1–10 (MAIVGSNSVS). A disordered region spans residues 1 to 61 (MAIVGSNSVS…SSQKSKNIVE (61 aa)). Over residues 18–54 (RNDARDLAEKIKRNALKKQEQDKKQQLEEESKPESSQ) the composition is skewed to basic and acidic residues. The Q motif signature appears at 71–99 (STFSELKLVPELLEAIQQMKFSKPTPIQS). In terms of domain architecture, Helicase ATP-binding spans 102–273 (IPHALEGKDI…RASLHNPVRV (172 aa)). 115-122 (AQTGSGKT) provides a ligand contact to ATP. A DEAD box motif is present at residues 221 to 224 (DEAD). Residues 300–444 (YLIHLLNEFV…KDPSPPKAML (145 aa)) form the Helicase C-terminal domain. The interval 460–484 (RQTKEFHEKTRRGRRGKDDKDREEH) is disordered. Residues 475 to 484 (GKDDKDREEH) show a composition bias toward basic and acidic residues.

This sequence belongs to the DEAD box helicase family. DDX47/RRP3 subfamily. Interacts with the SSU processome.

The protein localises to the nucleus. It carries out the reaction ATP + H2O = ADP + phosphate + H(+). Functionally, ATP-dependent rRNA helicase required for pre-ribosomal RNA processing. Involved in the maturation of the 35S-pre-rRNA and to its cleavage to mature 18S rRNA. The protein is ATP-dependent rRNA helicase RRP3 of Scheffersomyces stipitis (strain ATCC 58785 / CBS 6054 / NBRC 10063 / NRRL Y-11545) (Yeast).